The following is a 450-amino-acid chain: Probable glucan endo-1,3-beta-glucosidase eglC (450 aa).

Residues 1 to 18 (MQFTHLVALALALATSEA) form the signal peptide. Glutamate 128 acts as the Proton donor in catalysis. Residue asparagine 183 is glycosylated (N-linked (GlcNAc...) asparagine). Glutamate 239 (nucleophile) is an active-site residue. Residues asparagine 362 and asparagine 368 are each glycosylated (N-linked (GlcNAc...) asparagine). Composition is skewed to low complexity over residues 377–395 (SSAI…SGSS) and 405–420 (ASGQ…SAPS). The disordered stretch occupies residues 377–420 (SSAISGSSSGSAAGSSGSSGSSGSGASGASGQSSSSTGSSSAPS). A lipid anchor (GPI-anchor amidated asparagine) is attached at asparagine 427. Positions 428-450 (AASGLSGSICGAVVAVCLALAAL) are cleaved as a propeptide — removed in mature form.

The protein belongs to the glycosyl hydrolase 17 family. In terms of processing, the GPI-anchor is attached to the protein in the endoplasmic reticulum and serves to target the protein to the cell surface. There, the glucosamine-inositol phospholipid moiety is cleaved off and the GPI-modified mannoprotein is covalently attached via its lipidless GPI glycan remnant to the 1,6-beta-glucan of the outer cell wall layer.

It is found in the cell membrane. It localises to the secreted. The protein resides in the cell wall. The enzyme catalyses Hydrolysis of (1-&gt;3)-beta-D-glucosidic linkages in (1-&gt;3)-beta-D-glucans.. Functionally, glucanases play a role in cell expansion during growth, in cell-cell fusion during mating, and in spore release during sporulation. This enzyme may be involved in beta-glucan degradation and also function biosynthetically as a transglycosylase. The sequence is that of Probable glucan endo-1,3-beta-glucosidase eglC (eglC) from Aspergillus fumigatus (strain CBS 144.89 / FGSC A1163 / CEA10) (Neosartorya fumigata).